Consider the following 350-residue polypeptide: MRPYDIAKPFLFSLPAETANKSVHRLLETVDGTRVADVMADRYTVADERLAVEAFGHTFDNPVGVAAGFDKNATIPETLASLGFGFAEVGGVTAEPQAGNARPRMFRLKADEAIINRMGLNNDGAIVIGERLKNVDAPFPVGVNIAKTEHVGTNEAPDDYRTTYEHVAEGGDFFVVNVSCPNSEGFEELQNRDAMEAILSELQDAGAAPLLVKLSPDLPEPAVEDALDLVTELDLDGVVATNTTTERPASLRSPNAVETGGLSGKPIENQATEMVRFVAERVDVPVVGVGGVSTAEGAYRKIRAGASLVQLYTGLVYRGPSIAREINSGLRDLLAEDGFDSVEDAVGADL.

FMN-binding positions include 67–71 and Gly-91; that span reads AGFDK. Lys-71 lines the substrate pocket. Residue 116–120 coordinates substrate; that stretch reads NRMGL. The FMN site is built by Asn-144 and Asn-177. Residue Asn-177 coordinates substrate. Cys-180 serves as the catalytic Nucleophile. Residue Asn-182 participates in substrate binding. The FMN site is built by Lys-213 and Thr-241. 242–243 lines the substrate pocket; that stretch reads NT. The interval 245 to 265 is disordered; it reads TERPASLRSPNAVETGGLSGK. FMN-binding positions include Gly-264, Gly-291, and 312–313; that span reads YT.

This sequence belongs to the dihydroorotate dehydrogenase family. Type 2 subfamily. Monomer. FMN serves as cofactor.

It is found in the cell membrane. It carries out the reaction (S)-dihydroorotate + a quinone = orotate + a quinol. Its pathway is pyrimidine metabolism; UMP biosynthesis via de novo pathway; orotate from (S)-dihydroorotate (quinone route): step 1/1. Functionally, catalyzes the conversion of dihydroorotate to orotate with quinone as electron acceptor. The sequence is that of Dihydroorotate dehydrogenase (quinone) (pyrD) from Haloarcula marismortui (strain ATCC 43049 / DSM 3752 / JCM 8966 / VKM B-1809) (Halobacterium marismortui).